The following is a 177-amino-acid chain: Translation initiation factor IF-3 (177 aa).

Belongs to the IF-3 family. Monomer.

It is found in the cytoplasm. Its function is as follows. IF-3 binds to the 30S ribosomal subunit and shifts the equilibrium between 70S ribosomes and their 50S and 30S subunits in favor of the free subunits, thus enhancing the availability of 30S subunits on which protein synthesis initiation begins. In Elusimicrobium minutum (strain Pei191), this protein is Translation initiation factor IF-3.